The chain runs to 1361 residues: Zinc finger protein GLI4 (1361 aa).

A disordered region spans residues 185–270 (SSFGHTPLLH…PQPPDHLTDL (86 aa)). Composition is skewed to polar residues over residues 198–208 (TFASRQQGALT) and 227–241 (NKVS…TVNQ). 5 C2H2-type zinc fingers span residues 289–314 (TNCH…NNDH), 322–349 (FVCR…MRRH), 355–379 (HKCT…LRSH), 385–410 (YVCD…NRTH), and 416–441 (YICK…KTVH). Disordered stretches follow at residues 434–527 (RKHV…TNNI), 556–584 (STVS…GTAE), 647–720 (NERR…LPNL), 787–832 (NAGL…SMNS), 906–946 (QNRE…APGA), and 1134–1230 (DGLH…PKDN). The span at 475-502 (SGREHSDSVSRDQEHCLQTRTIKTEDNM) shows a compositional bias: basic and acidic residues. Residues 506–522 (SSPGGQSSCSSEPSPYG) are compositionally biased toward low complexity. Residues 573-584 (QRIHSAETGTAE) show a composition bias toward basic and acidic residues. Residues 653-670 (TSSTLSSAYTSRRSSGIS) are compositionally biased toward low complexity. 2 stretches are compositionally biased toward polar residues: residues 672–695 (YFSS…SSAD) and 710–720 (EASQHSGLPNL). Positions 805–821 (RASDPVRRTAGIDDKPL) are enriched in basic and acidic residues. Composition is skewed to polar residues over residues 913-939 (QNLQ…NTPE) and 1142-1164 (YTVQ…SGQA). The span at 1172–1183 (PRPPAAPHPPNR) shows a compositional bias: pro residues.

The protein belongs to the GLI C2H2-type zinc-finger protein family.

The protein localises to the nucleus. Has an essential role in the early embryonic patterning of mesoderm and neuroectoderm. This is Zinc finger protein GLI4 (gli4) from Xenopus laevis (African clawed frog).